We begin with the raw amino-acid sequence, 248 residues long: Aspartate/glutamate leucyltransferase (248 aa).

It belongs to the R-transferase family. Bpt subfamily.

It localises to the cytoplasm. The catalysed reaction is N-terminal L-glutamyl-[protein] + L-leucyl-tRNA(Leu) = N-terminal L-leucyl-L-glutamyl-[protein] + tRNA(Leu) + H(+). It carries out the reaction N-terminal L-aspartyl-[protein] + L-leucyl-tRNA(Leu) = N-terminal L-leucyl-L-aspartyl-[protein] + tRNA(Leu) + H(+). Functions in the N-end rule pathway of protein degradation where it conjugates Leu from its aminoacyl-tRNA to the N-termini of proteins containing an N-terminal aspartate or glutamate. The polypeptide is Aspartate/glutamate leucyltransferase (Methylobacillus flagellatus (strain ATCC 51484 / DSM 6875 / VKM B-1610 / KT)).